A 744-amino-acid chain; its full sequence is Putative pre-mRNA-splicing factor ATP-dependent RNA helicase DHX32 (744 aa).

Met1 is subject to N-acetylmethionine. Residues 1–28 (MDEEELDHPNASPEKRYFPESLDSSDGD) are disordered. One can recognise a Helicase ATP-binding domain in the interval 72–270 (MESLLQNQVV…RLIFEIHRSG (199 aa)). ATP is bound at residue 85 to 92 (GDSKCGKS). The DEAH box motif lies at 185 to 188 (DDVH). Residues 258-438 (SVIRLIFEIH…SMVLFMKRVD (181 aa)) enclose the Helicase C-terminal domain.

The protein belongs to the DEAD box helicase family. DEAH subfamily.

The protein resides in the nucleus. It localises to the mitochondrion. The enzyme catalyses ATP + H2O = ADP + phosphate + H(+). The chain is Putative pre-mRNA-splicing factor ATP-dependent RNA helicase DHX32 (Dhx32) from Mus musculus (Mouse).